An 81-amino-acid chain; its full sequence is MFLLVFLCCLHLVISSHTPDESFLCYQPDQVCCFICRGAAPLPSEGECNPHPTAPWCREGAVEWVPYSTGQCRTTCIPYVE.

Residues 1–15 form the signal peptide; it reads MFLLVFLCCLHLVIS. Disulfide bonds link cysteine 25/cysteine 48, cysteine 32/cysteine 76, cysteine 33/cysteine 57, and cysteine 36/cysteine 72.

Functionally, tightly binding, competitive inhibitor of different types of pancreatic-like carboxypeptidases. Inhibits human CPA4. This chain is Metallocarboxypeptidase inhibitor, found in Hirudo medicinalis (Medicinal leech).